The chain runs to 719 residues: MSQITPDVVAAHGLSEEEYQRVLHALGREPNLVELGIFSVMWSEHCSYKSSRIHLKKLPTSAPWVICGPGENAGVIDIGDGQAAIFKMESHNHPSYIEPYQGAATGVGGILRDVFTMGARPVANMNALRFGRPDHPKMKHLVQGVVAGIGGYGNCVGVPTVGGETNFHKAYDGNILVNAMTVGVADTDKIFYSAATGLGNPIVYVGSKTGRDGIHGATMASADFDEKSDEKRPTVQVGDPFTEKLLIEACLELMATDAIVAIQDMGAAGLTSSSVEMATNGKAGIILDMDKVPCREEGMTPYEMMLSESQERMLMVLKPGKEAMAEAIFRKWELDFAVIGEVTDTGHMVLKFQGETVCDIPLGPLAEDAPLYDRPALSLADYKAWANVAPLGTVPESTDLGADLVKLIGCPDLANRRWIFEQYDSQVGADTLQKSGGDAAVVRIHGTSKALAISTDCTPRYCYADPYEGGKQAVAETWRNICAVGARPLAITNCLNFANPQRPEIMAQIVQALNGMGDACRALDYPIVSGNVSLYNESKATGGGSAILPTPAIGGVGLMLDHEVMTTVAFKDEGDAIWLVGGEGTHLGQSLYLREIHGREDGDAPSVDLAVERRNGEQVREWIAAGRLSAVHDISDGGLLVALTEMALAGNKGCTLDIALTTAAAFGEDQSRYVVTTRAGEVLEGATRLGTVGGSQVAGVELAALREANEAFFRDWMEG.

His-45 is a catalytic residue. ATP-binding residues include Tyr-48 and Lys-87. Glu-89 provides a ligand contact to Mg(2+). Residues Ser-90 to His-93 and Arg-112 each bind substrate. The active-site Proton acceptor is the His-91. Residue Asp-113 participates in Mg(2+) binding. Gln-236 serves as a coordination point for substrate. Asp-264 contributes to the Mg(2+) binding site. Glu-308–Gln-310 contacts substrate. ATP is bound by residues Asn-493 and Gly-530. Residue Asn-531 coordinates Mg(2+). Ser-533 is a substrate binding site.

Belongs to the FGAMS family. In terms of assembly, monomer. Part of the FGAM synthase complex composed of 1 PurL, 1 PurQ and 2 PurS subunits.

The protein resides in the cytoplasm. It catalyses the reaction N(2)-formyl-N(1)-(5-phospho-beta-D-ribosyl)glycinamide + L-glutamine + ATP + H2O = 2-formamido-N(1)-(5-O-phospho-beta-D-ribosyl)acetamidine + L-glutamate + ADP + phosphate + H(+). It functions in the pathway purine metabolism; IMP biosynthesis via de novo pathway; 5-amino-1-(5-phospho-D-ribosyl)imidazole from N(2)-formyl-N(1)-(5-phospho-D-ribosyl)glycinamide: step 1/2. Functionally, part of the phosphoribosylformylglycinamidine synthase complex involved in the purines biosynthetic pathway. Catalyzes the ATP-dependent conversion of formylglycinamide ribonucleotide (FGAR) and glutamine to yield formylglycinamidine ribonucleotide (FGAM) and glutamate. The FGAM synthase complex is composed of three subunits. PurQ produces an ammonia molecule by converting glutamine to glutamate. PurL transfers the ammonia molecule to FGAR to form FGAM in an ATP-dependent manner. PurS interacts with PurQ and PurL and is thought to assist in the transfer of the ammonia molecule from PurQ to PurL. In Novosphingobium aromaticivorans (strain ATCC 700278 / DSM 12444 / CCUG 56034 / CIP 105152 / NBRC 16084 / F199), this protein is Phosphoribosylformylglycinamidine synthase subunit PurL.